Reading from the N-terminus, the 261-residue chain is EKC/KEOPS complex subunit BUD32 (261 aa).

In terms of domain architecture, Protein kinase spans aspartate 16 to glycine 261. ATP is bound by residues isoleucine 22 to valine 30 and lysine 43. Aspartate 161 serves as the catalytic Proton acceptor. 2 positions are modified to phosphoserine; by autocatalysis: serine 187 and serine 189.

This sequence belongs to the protein kinase superfamily. BUD32 family. As to quaternary structure, component of the EKC/KEOPS complex composed of at least BUD32, CGI121, GON7, KAE1 and PCC1; the whole complex dimerizes.

The protein resides in the cytoplasm. Its subcellular location is the nucleus. The protein localises to the chromosome. It is found in the telomere. The enzyme catalyses L-seryl-[protein] + ATP = O-phospho-L-seryl-[protein] + ADP + H(+). It carries out the reaction L-threonyl-[protein] + ATP = O-phospho-L-threonyl-[protein] + ADP + H(+). Functionally, component of the EKC/KEOPS complex that is required for the formation of a threonylcarbamoyl group on adenosine at position 37 (t(6)A37) in tRNAs that read codons beginning with adenine. The complex is probably involved in the transfer of the threonylcarbamoyl moiety of threonylcarbamoyl-AMP (TC-AMP) to the N6 group of A37. BUD32 has ATPase activity in the context of the EKC/KEOPS complex and likely plays a supporting role to the catalytic subunit KAE1. The EKC/KEOPS complex also promotes both telomere uncapping and telomere elongation. The complex is required for efficient recruitment of transcriptional coactivators. Important for bud site selection. This chain is EKC/KEOPS complex subunit BUD32 (BUD32), found in Saccharomyces cerevisiae (strain ATCC 204508 / S288c) (Baker's yeast).